The sequence spans 589 residues: Serine/threonine-protein kinase PknJ (589 aa).

The Cytoplasmic portion of the chain corresponds to 1 to 342 (MAHELSAGSV…LPRRPRRYRR (342 aa)). The 263-residue stretch at 14–276 (YRIERMLGAG…SAGEFAHAAA (263 aa)) folds into the Protein kinase domain. ATP is bound by residues 20-28 (LGAGGMGTV) and Lys43. The Proton acceptor role is filled by Asp136. A helical transmembrane segment spans residues 343–363 (GVAAVAAVMVVAAAAVTAVTM). Over 364 to 589 (TSHQPRTATP…TNYILAKIPG (226 aa)) the chain is Extracellular. The segment covering 365-387 (SHQPRTATPPSAAALSPTSSSTT) has biased composition (low complexity). The segment at 365–400 (SHQPRTATPPSAAALSPTSSSTTPPQPPIVTRSRLP) is disordered.

This sequence belongs to the protein kinase superfamily. Ser/Thr protein kinase family. As to quaternary structure, homodimer.

The protein resides in the cell membrane. It carries out the reaction L-seryl-[protein] + ATP = O-phospho-L-seryl-[protein] + ADP + H(+). It catalyses the reaction L-threonyl-[protein] + ATP = O-phospho-L-threonyl-[protein] + ADP + H(+). The sequence is that of Serine/threonine-protein kinase PknJ (pknJ) from Mycobacterium bovis (strain ATCC BAA-935 / AF2122/97).